The primary structure comprises 72 residues: Large ribosomal subunit protein eL40 (72 aa).

This sequence belongs to the eukaryotic ribosomal protein eL40 family.

In Nicotiana tabacum (Common tobacco), this protein is Large ribosomal subunit protein eL40.